The chain runs to 330 residues: DNA-directed RNA polymerase subunit alpha (330 aa).

An alpha N-terminal domain (alpha-NTD) region spans residues 1-225; the sequence is MSDLAIPTIS…KQFAALVSHN (225 aa). Residues 237–330 form an alpha C-terminal domain (alpha-CTD) region; that stretch reads VKYAIPEEKY…KKKNKGMDEA (94 aa).

The protein belongs to the RNA polymerase alpha chain family. Homodimer. The RNAP catalytic core consists of 2 alpha, 1 beta, 1 beta' and 1 omega subunit. When a sigma factor is associated with the core the holoenzyme is formed, which can initiate transcription.

The enzyme catalyses RNA(n) + a ribonucleoside 5'-triphosphate = RNA(n+1) + diphosphate. Functionally, DNA-dependent RNA polymerase catalyzes the transcription of DNA into RNA using the four ribonucleoside triphosphates as substrates. The chain is DNA-directed RNA polymerase subunit alpha from Dehalococcoides mccartyi (strain ATCC BAA-2266 / KCTC 15142 / 195) (Dehalococcoides ethenogenes (strain 195)).